The primary structure comprises 419 residues: L-rhamnose isomerase (419 aa).

Positions 262, 294, and 296 each coordinate Mn(2+).

This sequence belongs to the rhamnose isomerase family. In terms of assembly, homotetramer. It depends on Mn(2+) as a cofactor.

It is found in the cytoplasm. It catalyses the reaction L-rhamnopyranose = L-rhamnulose. It participates in carbohydrate degradation; L-rhamnose degradation; glycerone phosphate from L-rhamnose: step 1/3. In terms of biological role, catalyzes the interconversion of L-rhamnose and L-rhamnulose. This chain is L-rhamnose isomerase, found in Salmonella agona (strain SL483).